Here is a 44-residue protein sequence, read N- to C-terminus: Alpha-amylase inhibitor helianthamide (44 aa).

3 cysteine pairs are disulfide-bonded: C6/C38, C16/C33, and C20/C39. Residues 7–10 (YIYH) are inhibitory motif.

It belongs to the sea anemone alpha-amylase inhibitor family.

It localises to the secreted. In terms of biological role, specific pancreatic alpha-amylase (AMY2A) inhibitor. The recombinant peptide inhibits human pancreatic (Ki=0.01 nM) and porcine pancreatic alpha-amylases (Ki=0.1 nM). This chain is Alpha-amylase inhibitor helianthamide, found in Stichodactyla helianthus (Sun anemone).